Consider the following 297-residue polypeptide: Ribosomal RNA small subunit methyltransferase H (297 aa).

Residues 37 to 39 (GGH), glutamate 56, phenylalanine 87, aspartate 102, and histidine 109 each bind S-adenosyl-L-methionine.

This sequence belongs to the methyltransferase superfamily. RsmH family.

Its subcellular location is the cytoplasm. The catalysed reaction is cytidine(1402) in 16S rRNA + S-adenosyl-L-methionine = N(4)-methylcytidine(1402) in 16S rRNA + S-adenosyl-L-homocysteine + H(+). Functionally, specifically methylates the N4 position of cytidine in position 1402 (C1402) of 16S rRNA. In Borrelia recurrentis (strain A1), this protein is Ribosomal RNA small subunit methyltransferase H.